Here is a 78-residue protein sequence, read N- to C-terminus: Acyl carrier protein (78 aa).

Positions 2-77 (SEIASRVKAI…DAVSYIEANA (76 aa)) constitute a Carrier domain. Position 37 is an O-(pantetheine 4'-phosphoryl)serine (serine 37).

It belongs to the acyl carrier protein (ACP) family. 4'-phosphopantetheine is transferred from CoA to a specific serine of apo-ACP by AcpS. This modification is essential for activity because fatty acids are bound in thioester linkage to the sulfhydryl of the prosthetic group.

The protein resides in the cytoplasm. It functions in the pathway lipid metabolism; fatty acid biosynthesis. In terms of biological role, carrier of the growing fatty acid chain in fatty acid biosynthesis. The polypeptide is Acyl carrier protein (Phocaeicola vulgatus (strain ATCC 8482 / DSM 1447 / JCM 5826 / CCUG 4940 / NBRC 14291 / NCTC 11154) (Bacteroides vulgatus)).